A 144-amino-acid polypeptide reads, in one-letter code: Large ribosomal subunit protein uL15 (144 aa).

The segment at 1–56 (MELNTLAPAPGAKSSKKRVGRGIGSGLGKTGGRGHKGQKSRSGGSVKPGFEGGQMP) is disordered. Gly residues predominate over residues 21–31 (RGIGSGLGKTG).

It belongs to the universal ribosomal protein uL15 family. As to quaternary structure, part of the 50S ribosomal subunit.

In terms of biological role, binds to the 23S rRNA. The sequence is that of Large ribosomal subunit protein uL15 from Idiomarina loihiensis (strain ATCC BAA-735 / DSM 15497 / L2-TR).